The following is a 455-amino-acid chain: Probable glycine dehydrogenase (decarboxylating) subunit 1 (455 aa).

Belongs to the GcvP family. N-terminal subunit subfamily. The glycine cleavage system is composed of four proteins: P, T, L and H. In this organism, the P 'protein' is a heterodimer of two subunits.

It catalyses the reaction N(6)-[(R)-lipoyl]-L-lysyl-[glycine-cleavage complex H protein] + glycine + H(+) = N(6)-[(R)-S(8)-aminomethyldihydrolipoyl]-L-lysyl-[glycine-cleavage complex H protein] + CO2. Functionally, the glycine cleavage system catalyzes the degradation of glycine. The P protein binds the alpha-amino group of glycine through its pyridoxal phosphate cofactor; CO(2) is released and the remaining methylamine moiety is then transferred to the lipoamide cofactor of the H protein. This chain is Probable glycine dehydrogenase (decarboxylating) subunit 1, found in Francisella tularensis subsp. holarctica (strain FTNF002-00 / FTA).